Reading from the N-terminus, the 492-residue chain is Membrane-bound lytic murein transglycosylase F (492 aa).

Residues 1-18 (MKGLFLRIIAIVALLLWA) form the signal peptide. The interval 19–268 (IDMVFPWQQI…RIEEKYFNHL (250 aa)) is non-LT domain. The interval 270–492 (QFDYVDTRSY…DTLATTVTTQ (223 aa)) is LT domain. Glu313 is a catalytic residue.

The protein in the N-terminal section; belongs to the bacterial solute-binding protein 3 family. It in the C-terminal section; belongs to the transglycosylase Slt family.

Its subcellular location is the cell outer membrane. The catalysed reaction is Exolytic cleavage of the (1-&gt;4)-beta-glycosidic linkage between N-acetylmuramic acid (MurNAc) and N-acetylglucosamine (GlcNAc) residues in peptidoglycan, from either the reducing or the non-reducing ends of the peptidoglycan chains, with concomitant formation of a 1,6-anhydrobond in the MurNAc residue.. Functionally, murein-degrading enzyme that degrades murein glycan strands and insoluble, high-molecular weight murein sacculi, with the concomitant formation of a 1,6-anhydromuramoyl product. Lytic transglycosylases (LTs) play an integral role in the metabolism of the peptidoglycan (PG) sacculus. Their lytic action creates space within the PG sacculus to allow for its expansion as well as for the insertion of various structures such as secretion systems and flagella. The polypeptide is Membrane-bound lytic murein transglycosylase F (Pasteurella multocida (strain Pm70)).